The sequence spans 340 residues: MKATMVLTPLALAMAAVLSVSAYAGNEGGWHPPKPNPQSNNKGGATALVVDTQQNYNNKVSNFGTLNNASVSGSIKDASGNVGVNVAAGDNNQQANAAALASADASFVFGTATASTSVLQSGYGNTLNNYSNPNTASLSNSANNVSGNLGVNVAAGNFNQQKNDLAAAVSNGQYSTAGSAASQTSTGNTTVNSANYAYGGTYVSLKLNADGSYKGTSDQIGDVYLDTWEGQTHPGGSNTGHIDVDSQAQGAKDLNHDGGAFAFKEKGDVDLKGTVSGFIPAIVGFKTPVTNNASLSNSLQNVSGNVGVNIAAGGGNQQSNSLSIAAGCSSCPAGGESLGF.

The signal sequence occupies residues 1–24 (MKATMVLTPLALAMAAVLSVSAYA). The FapC_R1 repeat unit spans residues 67 to 100 (NNASVSGSIKDASGNVGVNVAAGDNNQQANAAAL). A linker 1 region spans residues 101 to 133 (ASADASFVFGTATASTSVLQSGYGNTLNNYSNP). The FapC_R2 repeat unit spans residues 134–167 (NTASLSNSANNVSGNLGVNVAAGNFNQQKNDLAA). The segment at 168-290 (AVSNGQYSTA…AIVGFKTPVT (123 aa)) is linker 2. The FapC_R3 repeat unit spans residues 291-324 (NNASLSNSLQNVSGNVGVNIAAGGGNQQSNSLSI). Positions 328–331 (CSSC) match the Cys-X-X-Cys motif.

Belongs to the FapB/FapC family. As to quaternary structure, the major component of purified amyloid fibrils. Fibrils are resistant to boiling in 2% (weight/vol) SDS and require &gt;90% (vol/vol) formic acid to dissolve. Interacts with FapA in vitro.

Its subcellular location is the fimbrium. It is found in the secreted. Functionally, the major functional amyloid subunit in this bacterium. Upon overexpression of the endogenous six-gene locus (fapA-fapF), cells form large clumps during liquid growth, make large amounts of biofilm and produce amyloid fibrils. The protein is Functional amyloid subunit FapC of Pseudomonas aeruginosa (strain ATCC 15692 / DSM 22644 / CIP 104116 / JCM 14847 / LMG 12228 / 1C / PRS 101 / PAO1).